The primary structure comprises 193 residues: Segregation and condensation protein B (193 aa).

Belongs to the ScpB family. As to quaternary structure, homodimer. Homodimerization may be required to stabilize the binding of ScpA to the Smc head domains. Component of a cohesin-like complex composed of ScpA, ScpB and the Smc homodimer, in which ScpA and ScpB bind to the head domain of Smc. The presence of the three proteins is required for the association of the complex with DNA.

It is found in the cytoplasm. Functionally, participates in chromosomal partition during cell division. May act via the formation of a condensin-like complex containing Smc and ScpA that pull DNA away from mid-cell into both cell halves. This Clostridium botulinum (strain Kyoto / Type A2) protein is Segregation and condensation protein B.